The chain runs to 291 residues: Urease accessory protein UreD (291 aa).

It belongs to the UreD family. In terms of assembly, ureD, UreF and UreG form a complex that acts as a GTP-hydrolysis-dependent molecular chaperone, activating the urease apoprotein by helping to assemble the nickel containing metallocenter of UreC. The UreE protein probably delivers the nickel.

Its subcellular location is the cytoplasm. Functionally, required for maturation of urease via the functional incorporation of the urease nickel metallocenter. The polypeptide is Urease accessory protein UreD (Polynucleobacter asymbioticus (strain DSM 18221 / CIP 109841 / QLW-P1DMWA-1) (Polynucleobacter necessarius subsp. asymbioticus)).